Reading from the N-terminus, the 298-residue chain is Acetyl-coenzyme A carboxylase carboxyl transferase subunit beta (298 aa).

One can recognise a CoA carboxyltransferase N-terminal domain in the interval Val25–Ala295. Residues Cys29, Cys32, Cys48, and Cys51 each coordinate Zn(2+). A C4-type zinc finger spans residues Cys29 to Cys51.

The protein belongs to the AccD/PCCB family. Acetyl-CoA carboxylase is a heterohexamer composed of biotin carboxyl carrier protein (AccB), biotin carboxylase (AccC) and two subunits each of ACCase subunit alpha (AccA) and ACCase subunit beta (AccD). The cofactor is Zn(2+).

It localises to the cytoplasm. It catalyses the reaction N(6)-carboxybiotinyl-L-lysyl-[protein] + acetyl-CoA = N(6)-biotinyl-L-lysyl-[protein] + malonyl-CoA. It participates in lipid metabolism; malonyl-CoA biosynthesis; malonyl-CoA from acetyl-CoA: step 1/1. Component of the acetyl coenzyme A carboxylase (ACC) complex. Biotin carboxylase (BC) catalyzes the carboxylation of biotin on its carrier protein (BCCP) and then the CO(2) group is transferred by the transcarboxylase to acetyl-CoA to form malonyl-CoA. The protein is Acetyl-coenzyme A carboxylase carboxyl transferase subunit beta of Herpetosiphon aurantiacus (strain ATCC 23779 / DSM 785 / 114-95).